Reading from the N-terminus, the 77-residue chain is U10-lycotoxin-Ls1d (77 aa).

Positions 1-20 (MKLIIFTGLFLFAIVSLIEA) are cleaved as a signal peptide. Residues 21–26 (EEESGR) constitute a propeptide that is removed on maturation.

Belongs to the neurotoxin 19 (CSTX) family. 09 (U10-Lctx) subfamily. In terms of processing, contains 4 disulfide bonds. Expressed by the venom gland.

Its subcellular location is the secreted. The chain is U10-lycotoxin-Ls1d from Lycosa singoriensis (Wolf spider).